The chain runs to 201 residues: uncharacterized protein (201 aa).

This is an uncharacterized protein from Bacillus subtilis (strain 168).